A 188-amino-acid polypeptide reads, in one-letter code: Elongation factor P (188 aa).

N6-(3,6-diaminohexanoyl)-5-hydroxylysine is present on lysine 34.

Belongs to the elongation factor P family. Post-translationally, may be beta-lysylated on the epsilon-amino group of Lys-34 by the combined action of EpmA and EpmB, and then hydroxylated on the C5 position of the same residue by EpmC (if this protein is present). Lysylation is critical for the stimulatory effect of EF-P on peptide-bond formation. The lysylation moiety may extend toward the peptidyltransferase center and stabilize the terminal 3-CCA end of the tRNA. Hydroxylation of the C5 position on Lys-34 may allow additional potential stabilizing hydrogen-bond interactions with the P-tRNA.

The protein localises to the cytoplasm. Its pathway is protein biosynthesis; polypeptide chain elongation. Functionally, involved in peptide bond synthesis. Alleviates ribosome stalling that occurs when 3 or more consecutive Pro residues or the sequence PPG is present in a protein, possibly by augmenting the peptidyl transferase activity of the ribosome. Modification of Lys-34 is required for alleviation. The chain is Elongation factor P from Serratia proteamaculans (strain 568).